A 528-amino-acid polypeptide reads, in one-letter code: GMP synthase [glutamine-hydrolyzing] (528 aa).

One can recognise a Glutamine amidotransferase type-1 domain in the interval 13–204 (SILILDFGSQ…VYKISCCTAD (192 aa)). The Nucleophile role is filled by Cys-90. Residues His-178 and Glu-180 contribute to the active site. The GMPS ATP-PPase domain occupies 205-403 (WTTETYIEET…LGLPDEIIKR (199 aa)). ATP is bound at residue 232–238 (SGGVDSS).

Homodimer.

It carries out the reaction XMP + L-glutamine + ATP + H2O = GMP + L-glutamate + AMP + diphosphate + 2 H(+). It functions in the pathway purine metabolism; GMP biosynthesis; GMP from XMP (L-Gln route): step 1/1. In terms of biological role, catalyzes the synthesis of GMP from XMP. The sequence is that of GMP synthase [glutamine-hydrolyzing] from Prochlorococcus marinus (strain AS9601).